A 793-amino-acid chain; its full sequence is Endonuclease MutS2 (793 aa).

329–336 lines the ATP pocket; it reads GPNTGGKT. The segment at 611 to 639 is disordered; sequence LARARQAVEPTEEEQRARRRGEVPRGLKP. Basic and acidic residues predominate over residues 623–639; the sequence is EEQRARRRGEVPRGLKP. The region spanning 717-792 is the Smr domain; the sequence is VDLRGLMVEE…GDGVTVAKLR (76 aa).

It belongs to the DNA mismatch repair MutS family. MutS2 subfamily. Homodimer. Binds to stalled ribosomes, contacting rRNA.

Endonuclease that is involved in the suppression of homologous recombination and thus may have a key role in the control of bacterial genetic diversity. In terms of biological role, acts as a ribosome collision sensor, splitting the ribosome into its 2 subunits. Detects stalled/collided 70S ribosomes which it binds and splits by an ATP-hydrolysis driven conformational change. Acts upstream of the ribosome quality control system (RQC), a ribosome-associated complex that mediates the extraction of incompletely synthesized nascent chains from stalled ribosomes and their subsequent degradation. Probably generates substrates for RQC. The polypeptide is Endonuclease MutS2 (Symbiobacterium thermophilum (strain DSM 24528 / JCM 14929 / IAM 14863 / T)).